A 310-amino-acid polypeptide reads, in one-letter code: MTAPLFESTITSLPLINKGKVRDIYAVDADKLLIVTTDRLSAFDVILPDPIPRKGEVLQAVANFWFDKLGHIVPNQLTGIDPETVVAENEREQVRGRAVVVKRLKPLPIEAVVRGYVIGSGWKDYQETGAICGIALPAGLKMAAKLPSPIFTPATKAAVGDHDENVSFATAQANCAADLAEALAGTGKNGAGLADEARIAAIRLYEEASAYARGRGIIIADTKFEFGIDAAGTLHLIDEALTPDSSRFWPADHYQEGSNPPSYDKQYVRDYLETLDWGKVAPGPKLPADVIARTSAKYIEAYEKLTGKTL.

This sequence belongs to the SAICAR synthetase family.

The catalysed reaction is 5-amino-1-(5-phospho-D-ribosyl)imidazole-4-carboxylate + L-aspartate + ATP = (2S)-2-[5-amino-1-(5-phospho-beta-D-ribosyl)imidazole-4-carboxamido]succinate + ADP + phosphate + 2 H(+). Its pathway is purine metabolism; IMP biosynthesis via de novo pathway; 5-amino-1-(5-phospho-D-ribosyl)imidazole-4-carboxamide from 5-amino-1-(5-phospho-D-ribosyl)imidazole-4-carboxylate: step 1/2. This is Phosphoribosylaminoimidazole-succinocarboxamide synthase from Dechloromonas aromatica (strain RCB).